Here is a 649-residue protein sequence, read N- to C-terminus: Microtubule-associated protein VP6 (649 aa).

It localises to the virion. The protein localises to the host cytoplasm. It is found in the host cytoskeleton. In terms of biological role, minor inner capsid component. Displays NTPase and RNA 5'-triphosphatase (RTPase) activities. May function as a cofactor of polymerase VP2. Associates with microtubules and plays a role in the formation, structural organization and morphology of viral inclusions, where the assembly of cores and the replication of viral RNA occur. The protein is Microtubule-associated protein VP6 (S6) of Cryphonectria parasitica (Chestnut blight fungus).